Consider the following 152-residue polypeptide: Protein SprT-like (152 aa).

A SprT-like domain is found at 7–148; that stretch reads QRLVEEVSLQ…GKCKGKLILI (142 aa). Histidine 67 is a binding site for Zn(2+). Residue glutamate 68 is part of the active site. Histidine 71 lines the Zn(2+) pocket.

Belongs to the SprT family. Zn(2+) serves as cofactor.

Its subcellular location is the cytoplasm. This is Protein SprT-like from Bacillus cereus (strain ATCC 10987 / NRS 248).